Reading from the N-terminus, the 79-residue chain is Raniseptin-3 (79 aa).

An N-terminal signal peptide occupies residues 1–22 (MAFLKKSLFLVLFLGIVSLSIC). The propeptide occupies 23 to 49 (EEEKREGEEEEKQEEENEELSEEELRE).

This sequence belongs to the frog skin active peptide (FSAP) family. Dermaseptin subfamily. As to expression, expressed by the skin glands.

The protein localises to the secreted. In terms of biological role, has antibacterial activity. This is Raniseptin-3 from Boana raniceps (Chaco tree frog).